Consider the following 669-residue polypeptide: p135Gag-Myb-Ets-transforming protein (669 aa).

Residues 1 to 10 (NSTMRRKVEQ) are compositionally biased toward basic and acidic residues. 2 disordered regions span residues 1–27 (NSTM…SATT) and 132–153 (TQNH…NTMT). A transcriptional activation domain region spans residues 90-142 (PAAAAIQRHYNDEDPEKEKRIKELELLLMSTENELKGQQALPTQNHTANYPGW). Residues 276–361 (ATFSGFAKEQ…EHLEILQKEE (86 aa)) form the PNT domain. A DNA-binding region (ETS) is located at residues 556 to 640 (GSGPIQLWQF…AGKRYVYRFV (85 aa)).

The protein resides in the host nucleus. Its function is as follows. DNA-binding protein that specifically recognizes the sequence 5'-YAAC[GT]G-3'. The Myb-Ets protein induces predominantly erythroblastosis in chicken and transforms avian erythroblasts and immature myelomonocytic cells in culture. It appears that the Ets domain is responsible for the effects on erythroid cells and that the Myb domain encodes the myeloid-transforming capacity. This Avian leukemia virus E26 protein is p135Gag-Myb-Ets-transforming protein (GAG).